The following is a 226-amino-acid chain: Probable endonuclease LCL3 (226 aa).

Residues 15–32 traverse the membrane as a helical segment; sequence VFYTSILTGGILSSFYVY. One can recognise a TNase-like domain in the interval 53 to 212; that stretch reads RTLFGRVTSV…RKKKIGMFQQ (160 aa). Arg-103 is a catalytic residue. Position 108 (Asp-108) interacts with Ca(2+). Active-site residues include Glu-111 and Arg-151.

It belongs to the LCL3 family.

Its subcellular location is the mitochondrion. It localises to the membrane. The chain is Probable endonuclease LCL3 (LCL3) from Yarrowia lipolytica (strain CLIB 122 / E 150) (Yeast).